We begin with the raw amino-acid sequence, 63 residues long: Conotoxin Tx-D0111 (63 aa).

The N-terminal stretch at 1 to 19 (MRCLPVFVILLLLIASTPS) is a signal peptide. Residues 20–47 (DTVPLKTKDDMPQASFHGNARRTLQMLS) constitute a propeptide that is removed on maturation.

Belongs to the conotoxin T superfamily. Post-translationally, contains 2 disulfide bonds that can be either 'C1-C3, C2-C4' or 'C1-C4, C2-C3', since these disulfide connectivities have been observed for conotoxins with cysteine framework V (for examples, see AC P0DQQ7 and AC P81755). Expressed by the venom duct.

It is found in the secreted. This chain is Conotoxin Tx-D0111, found in Conus textile (Cloth-of-gold cone).